A 583-amino-acid chain; its full sequence is Putative fatty-acid--CoA ligase fadD25 (583 aa).

Helical transmembrane passes span 77–97 (YVVS…LSIP), 109–129 (VFAD…DNVV), and 229–249 (FVLG…TSPI). Residues 353–375 (IVQFDPQKLPDGQAERTESDGGT) are disordered.

It belongs to the ATP-dependent AMP-binding enzyme family.

It localises to the cell membrane. In Mycobacterium tuberculosis (strain CDC 1551 / Oshkosh), this protein is Putative fatty-acid--CoA ligase fadD25 (fadD25).